A 315-amino-acid polypeptide reads, in one-letter code: Protein FRA10AC1 homolog (315 aa).

M1 carries the N-acetylmethionine modification. The disordered stretch occupies residues 1–28 (MHGHGGYDSDFSDDEQGGGSSKKRKKTV). 2 positions are modified to phosphoserine: S9 and S12. K36 is subject to N6-acetyllysine. The span at 225 to 235 (KEIKSTKKRSK) shows a compositional bias: basic residues. Residues 225 to 308 (KEIKSTKKRS…EKSQEEEFDD (84 aa)) are disordered. Positions 236 to 245 (TKTESDESPH) are enriched in basic and acidic residues. Residues S251 and S252 each carry the phosphoserine modification. A compositionally biased stretch (basic and acidic residues) spans 257–279 (SQGKDEGHSSSKRSEDSRNRNAG). Phosphoserine is present on residues S283 and S285.

Interacts with ESS2.

It localises to the nucleus. In terms of biological role, may be involved in pre-mRNA splicing. This Rattus norvegicus (Rat) protein is Protein FRA10AC1 homolog (Fra10ac1).